The primary structure comprises 404 residues: 8-amino-7-oxononanoate synthase (404 aa).

Arg-20 contacts substrate. 116-117 (GY) contacts pyridoxal 5'-phosphate. Residue His-141 participates in substrate binding. Positions 187, 215, and 243 each coordinate pyridoxal 5'-phosphate. N6-(pyridoxal phosphate)lysine is present on Lys-246. Thr-366 contributes to the substrate binding site.

This sequence belongs to the class-II pyridoxal-phosphate-dependent aminotransferase family. BioF subfamily. As to quaternary structure, homodimer. Pyridoxal 5'-phosphate is required as a cofactor.

The enzyme catalyses 6-carboxyhexanoyl-[ACP] + L-alanine + H(+) = (8S)-8-amino-7-oxononanoate + holo-[ACP] + CO2. It functions in the pathway cofactor biosynthesis; biotin biosynthesis. In terms of biological role, catalyzes the decarboxylative condensation of pimeloyl-[acyl-carrier protein] and L-alanine to produce 8-amino-7-oxononanoate (AON), [acyl-carrier protein], and carbon dioxide. This chain is 8-amino-7-oxononanoate synthase, found in Cupriavidus taiwanensis (strain DSM 17343 / BCRC 17206 / CCUG 44338 / CIP 107171 / LMG 19424 / R1) (Ralstonia taiwanensis (strain LMG 19424)).